Here is a 332-residue protein sequence, read N- to C-terminus: MELRTDAVLASLEMSEPVKNDEDYESLPAHASLGTHMTAGAVAGILEHTVMYPVDSVKTRMQSLQPDPKAQYRSVYGALKRIVRTEGLLRPLRGLNITVLGAGPAHALYFACYERIKRSLSDVIQNGGNSHIANGVAGSVATVLHDAVMNPAEVVKQRMQMYNSPYRSLYDCVLMVSRKEGLAAFYRSYSTQLTMNIPFQAVHFITYEFMQEHFNPHRQYRPETHIISGAAAGAVSAAVTTPLDVCKTLLNTQENVALSSAHVSGHLSGMVNALRTVYRLGGVPAFFKGIQARVIYQMPSTAIAWSVYEFFKYFLTQHESHVQEVSHKTSPT.

Solcar repeat units follow at residues 31–119 (ASLG…IKRS), 129–213 (NSHI…MQEH), and 220–314 (YRPE…FKYF). The next 6 helical transmembrane spans lie at 33–52 (LGTH…TVMY), 94–113 (GLNI…FACY), 131–150 (HIAN…AVMN), 188–207 (SYST…FITY), 222–241 (PETH…AVTT), and 289–308 (GIQA…WSVY).

Belongs to the mitochondrial carrier (TC 2.A.29) family. As to expression, highly expressed in hematopoietic organs, Expressed in the intermediate cell mass (ICM), a tissue equivalent to the mammalian extraembryonic yolk-sac blood islands. Colocalizes with gata1.

It localises to the mitochondrion inner membrane. The enzyme catalyses Fe(2+)(in) = Fe(2+)(out). In terms of biological role, mitochondrial iron transporter that specifically mediates iron uptake in developing erythroid cells, thereby playing an essential role in heme biosynthesis. The polypeptide is Mitoferrin-1 (slc25a37) (Danio rerio (Zebrafish)).